The primary structure comprises 165 residues: MAKVEQNEGLVEKLVAVDRVAKVVKGGRIFSFTALTVVGDGNGRVGFGRGKAREVPAAISKALEAARRNMITVDLAGTTLQHPVNARHGASRVYMQPASEGTGVIAGGAMRAVLEAAGVHNVLAKCYGSTNAANVVNATFKGLRDMTSPEKVAAKRGLSVEQIQG.

The 64-residue stretch at 10 to 73 folds into the S5 DRBM domain; it reads LVEKLVAVDR…EAARRNMITV (64 aa).

This sequence belongs to the universal ribosomal protein uS5 family. In terms of assembly, part of the 30S ribosomal subunit. Contacts proteins S4 and S8.

In terms of biological role, with S4 and S12 plays an important role in translational accuracy. Functionally, located at the back of the 30S subunit body where it stabilizes the conformation of the head with respect to the body. The chain is Small ribosomal subunit protein uS5 from Acinetobacter baylyi (strain ATCC 33305 / BD413 / ADP1).